A 234-amino-acid polypeptide reads, in one-letter code: Phosphatidylcholine synthase (234 aa).

Topologically, residues 1-3 are cytoplasmic; the sequence is MKN. The helical transmembrane segment at 4–24 threads the bilayer; sequence INLILAWLVHIFTASGLIVGL. Residues 25–26 are Periplasmic-facing; sequence YS. Residues 27–47 form a helical membrane-spanning segment; it reads IISIVNGNYSLLLKLTVIGLI. The Cytoplasmic portion of the chain corresponds to 48–75; sequence IDGIDGTMARKLKVKELIPEIDGTLLDN. The chain crosses the membrane as a helical span at residues 76 to 96; it reads ITDYINYTFIPVIFFYLGEFI. Over 97–98 the chain is Periplasmic; the sequence is EE. Residues 99 to 116 traverse the membrane as a helical segment; the sequence is KYKVAICIGILLSSAYQF. The Cytoplasmic portion of the chain corresponds to 117–126; the sequence is SRTDAKTNDN. Residues 127–147 traverse the membrane as a helical segment; that stretch reads YFRGFPSLWNLFVILNIIFKM. Topologically, residues 148–149 are periplasmic; the sequence is EQ. Residues 150-170 form a helical membrane-spanning segment; the sequence is ITNLITMSICIITSFIPIKFI. The Cytoplasmic segment spans residues 171–180; the sequence is YPSKTKELRK. The helical transmembrane segment at 181–201 threads the bilayer; the sequence is ITIPITIISCLIFVVSIFSEL. Residues 202–207 lie on the Periplasmic side of the membrane; sequence STTALK. Residues 208–228 form a helical membrane-spanning segment; the sequence is MAKTVLILYFAYLTLASIYLT. The Cytoplasmic portion of the chain corresponds to 229-234; sequence YKTRNR.

The protein belongs to the CDP-alcohol phosphatidyltransferase class-I family. Requires Mn(2+) as cofactor.

Its subcellular location is the cell inner membrane. It catalyses the reaction a CDP-1,2-diacyl-sn-glycerol + choline = a 1,2-diacyl-sn-glycero-3-phosphocholine + CMP + H(+). Functionally, condenses choline with CDP-diglyceride to produce phosphatidylcholine and CMP. In Borreliella burgdorferi (strain ATCC 35210 / DSM 4680 / CIP 102532 / B31) (Borrelia burgdorferi), this protein is Phosphatidylcholine synthase.